Here is a 138-residue protein sequence, read N- to C-terminus: MPARILVVQEDPDIAAYLVSLFRQAGYKADAATEGPDAVEMVQASRPDVVFLDLALPQRWGPRFYSWMVTQPGCGNVPVVLVTDFAGLELMVPNAVGTVDKPFDPVLLLALVDRALATYAKGTPDTPDTTGAPAPDNR.

The Response regulatory domain occupies 4–116 (RILVVQEDPD…LLLALVDRAL (113 aa)). Residues aspartate 13 and aspartate 53 each carry the 4-aspartylphosphate modification.

May be involved in regulation of gene transcription. Belongs to the family of response regulators, and members of this family involved in the regulation of gene transcription are two-domain proteins. This protein contains only the N-terminal phosphorylation domain and not the C-terminal DNA-binding domain but it may bind to Rrf2 protein and the latter may bind to DNA. The polypeptide is Protein Rrf1 (rrf1) (Nitratidesulfovibrio vulgaris (strain ATCC 29579 / DSM 644 / CCUG 34227 / NCIMB 8303 / VKM B-1760 / Hildenborough) (Desulfovibrio vulgaris)).